Here is a 125-residue protein sequence, read N- to C-terminus: Histone H1-like protein Hc1 (125 aa).

Residues 98–125 (TKAKVKPTKKAAPKTKVKTAKKTRSTKK) are disordered. Residues 100-125 (AKVKPTKKAAPKTKVKTAKKTRSTKK) show a composition bias toward basic residues.

This sequence belongs to the histone H1/H5 family. HCT subfamily.

In terms of biological role, might have a role analogous to that of eukaryotic histone proteins. This Chlamydia trachomatis serovar D (strain ATCC VR-885 / DSM 19411 / UW-3/Cx) protein is Histone H1-like protein Hc1 (hctA).